The chain runs to 843 residues: MGPQARTLHLLFLLLHALPKPVMLVGNSDFHLAGDYLLGGLFTLHANVKSVSHLSYLQVPKCNEYNMKVLGYNLMQAMRFAVEEINNCSSLLPGVLLGYEMVDVCYLSNNIQPGLYFLSQIDDFLPILKDYSQYRPQVVAVIGPDNSESAITVSNILSYFLVPQVTYSAITDKLRDKRRFPAMLRTVPSATHHIEAMVQLMVHFQWNWIVVLVSDDDYGRENSHLLSQRLTNTGDICIAFQEVLPVPEPNQAVRPEEQDQLDNILDKLRRTSARVVVIFSPELSLHNFFREVLRWNFTGFVWIASESWAIDPVLHNLTELRHTGTFLGVTIQRVSIPGFSQFRVRHDKPEYPMPNETSLRTTCNQDCDACMNITESFNNVLMLSGERVVYSVYSAVYAVAHTLHRLLHCNQVRCTKQIVYPWQLLREIWHVNFTLLGNQLFFDEQGDMPMLLDIIQWQWGLSQNPFQSIASYSPTETRLTYISNVSWYTPNNTVPISMCSKSCQPGQMKKPIGLHPCCFECVDCPPGTYLNRSVDEFNCLSCPGSMWSYKNNIACFKRRLAFLEWHEVPTIVVTILAALGFISTLAILLIFWRHFQTPMVRSAGGPMCFLMLVPLLLAFGMVPVYVGPPTVFSCFCRQAFFTVCFSVCLSCITVRSFQIVCVFKMARRLPSAYGFWMRYHGPYVFVAFITAVKVALVAGNMLATTINPIGRTDPDDPNIIILSCHPNYRNGLLFNTSMDLLLSVLGFSFAYVGKELPTNYNEAKFITLSMTFSFTSSISLCTFMSVHDGVLVTIMDLLVTVLNFLAIGLGYFGPKCYMILFYPERNTSAYFNSMIQGYTMRKS.

A signal peptide spans 1–19; that stretch reads MGPQARTLHLLFLLLHALP. Residues 20–570 are Extracellular-facing; the sequence is KPVMLVGNSD…AFLEWHEVPT (551 aa). Residues N87, N296, N316, N355, N372, N432, N484, N491, and N531 are each glycosylated (N-linked (GlcNAc...) asparagine). Residues 571–591 traverse the membrane as a helical segment; that stretch reads IVVTILAALGFISTLAILLIF. Residues 592-606 are Cytoplasmic-facing; sequence WRHFQTPMVRSAGGP. Residues 607–627 traverse the membrane as a helical segment; it reads MCFLMLVPLLLAFGMVPVYVG. The Extracellular segment spans residues 628–642; it reads PPTVFSCFCRQAFFT. A helical membrane pass occupies residues 643–663; sequence VCFSVCLSCITVRSFQIVCVF. Residues 664–682 are Cytoplasmic-facing; the sequence is KMARRLPSAYGFWMRYHGP. The chain crosses the membrane as a helical span at residues 683–703; that stretch reads YVFVAFITAVKVALVAGNMLA. Over 704–731 the chain is Extracellular; that stretch reads TTINPIGRTDPDDPNIIILSCHPNYRNG. The helical transmembrane segment at 732–752 threads the bilayer; the sequence is LLFNTSMDLLLSVLGFSFAYV. The Cytoplasmic segment spans residues 753-764; the sequence is GKELPTNYNEAK. A helical membrane pass occupies residues 765 to 785; the sequence is FITLSMTFSFTSSISLCTFMS. Residues 786 to 789 are Extracellular-facing; sequence VHDG. A helical membrane pass occupies residues 790–810; it reads VLVTIMDLLVTVLNFLAIGLG. At 811 to 843 the chain is on the cytoplasmic side; the sequence is YFGPKCYMILFYPERNTSAYFNSMIQGYTMRKS.

The protein belongs to the G-protein coupled receptor 3 family. TAS1R subfamily. Forms heterodimers with TAS1R3. In terms of tissue distribution, expressed mainly in circumvallate and foliate taste papillae.

It localises to the cell membrane. Its function is as follows. Putative taste receptor. TAS1R2/TAS1R3 recognizes diverse natural and synthetic sweeteners. This is Taste receptor type 1 member 2 (Tas1r2) from Mus musculus (Mouse).